Here is a 91-residue protein sequence, read N- to C-terminus: YcgL domain-containing protein ETA_15380 (91 aa).

One can recognise a YcgL domain in the interval Met1–Leu85.

The polypeptide is YcgL domain-containing protein ETA_15380 (Erwinia tasmaniensis (strain DSM 17950 / CFBP 7177 / CIP 109463 / NCPPB 4357 / Et1/99)).